The following is a 329-amino-acid chain: Biotin synthase (329 aa).

Residues 46–275 enclose the Radical SAM core domain; it reads FFGRRLKLVR…LNPKAELRAS (230 aa). [4Fe-4S] cluster-binding residues include cysteine 64, cysteine 68, and cysteine 71. The [2Fe-2S] cluster site is built by cysteine 108, cysteine 140, cysteine 200, and arginine 273.

Belongs to the radical SAM superfamily. Biotin synthase family. Homodimer. [4Fe-4S] cluster is required as a cofactor. Requires [2Fe-2S] cluster as cofactor.

It carries out the reaction (4R,5S)-dethiobiotin + (sulfur carrier)-SH + 2 reduced [2Fe-2S]-[ferredoxin] + 2 S-adenosyl-L-methionine = (sulfur carrier)-H + biotin + 2 5'-deoxyadenosine + 2 L-methionine + 2 oxidized [2Fe-2S]-[ferredoxin]. Its pathway is cofactor biosynthesis; biotin biosynthesis; biotin from 7,8-diaminononanoate: step 2/2. Its function is as follows. Catalyzes the conversion of dethiobiotin (DTB) to biotin by the insertion of a sulfur atom into dethiobiotin via a radical-based mechanism. The protein is Biotin synthase of Thermus thermophilus (strain ATCC 27634 / DSM 579 / HB8).